Consider the following 206-residue polypeptide: Proteasome subunit beta 1 (206 aa).

Residues 1–5 constitute a propeptide, removed in mature form; by autocatalysis; that stretch reads MLMKG. The active-site Nucleophile is T6.

This sequence belongs to the peptidase T1B family. The 20S proteasome core is composed of 14 alpha and 14 beta subunits that assemble into four stacked heptameric rings, resulting in a barrel-shaped structure. The two inner rings, each composed of seven catalytic beta subunits, are sandwiched by two outer rings, each composed of seven alpha subunits. The catalytic chamber with the active sites is on the inside of the barrel. Has a gated structure, the ends of the cylinder being occluded by the N-termini of the alpha-subunits. Is capped at one or both ends by the proteasome regulatory ATPase, PAN.

The protein resides in the cytoplasm. The catalysed reaction is Cleavage of peptide bonds with very broad specificity.. The formation of the proteasomal ATPase PAN-20S proteasome complex, via the docking of the C-termini of PAN into the intersubunit pockets in the alpha-rings, triggers opening of the gate for substrate entry. Interconversion between the open-gate and close-gate conformations leads to a dynamic regulation of the 20S proteasome proteolysis activity. Its function is as follows. Component of the proteasome core, a large protease complex with broad specificity involved in protein degradation. This Korarchaeum cryptofilum (strain OPF8) protein is Proteasome subunit beta 1.